We begin with the raw amino-acid sequence, 1196 residues long: Protein BRASSINOSTEROID INSENSITIVE 1 (1196 aa).

The signal sequence occupies residues 1 to 23 (MKTFSSFFLSVTTLFFFSFFSLS). Positions 62–69 (CTFDGVTC) match the Cys pair 1 motif. 21 LRR repeats span residues 71 to 98 (DDKV…LLSL), 99 to 121 (TGLE…FKCS), 122 to 146 (ASLT…SLGS), 148 to 169 (SGLK…VSGG), 172 to 197 (LNSL…VLSD), 199 to 221 (CGEL…VSRC), 222 to 244 (VNLE…LGDC), 245 to 268 (SALQ…ISTC), 269 to 290 (TELK…PLPL), 291 to 314 (KSLQ…LSGA), 316 to 338 (DTLT…FFGS), 339 to 363 (CSLL…TLLK), 364 to 388 (MRGL…LTNL), 390 to 413 (ASLL…LCQN), 415 to 439 (KNTL…LSNC), 441 to 463 (ELVS…LGSL), 464 to 487 (SKLR…LMYV), 488 to 511 (KTLE…LSNC), 513 to 535 (NLNW…IGRL), 536 to 559 (ENLA…LGDC), and 561 to 583 (SLIW…MFKQ). A glycan (N-linked (GlcNAc...) asparagine) is linked at Asn112. An N-linked (GlcNAc...) asparagine glycan is attached at Asn154. The N-linked (GlcNAc...) asparagine glycan is linked to Asn233. A glycan (N-linked (GlcNAc...) asparagine) is linked at Asn275. Asn351, Asn387, Asn401, and Asn438 each carry an N-linked (GlcNAc...) asparagine glycan. Asn510 carries N-linked (GlcNAc...) asparagine glycosylation. Asn545 and Asn573 each carry an N-linked (GlcNAc...) asparagine glycan. Tyr597 provides a ligand contact to brassinolide. Asn636 carries N-linked (GlcNAc...) asparagine glycosylation. The interval 640 to 642 (RVY) is SERK1 binding. Tyr642 and Ser647 together coordinate brassinolide. An N-linked (GlcNAc...) asparagine glycan is attached at Asn653. LRR repeat units lie at residues 653-677 (NGSM…IGSM), 678-701 (PYLF…VGDL), 702-725 (RGLN…MSAL), and 727-750 (MLTE…QFET). Asn705 contacts brassinolide. Residues 726–729 (TMLT) form an SERK1 binding region. Asn737 carries an N-linked (GlcNAc...) asparagine glycan. The interval 746–750 (GQFET) is SERK1 binding. Residues 763-770 (CGYPLPRC) carry the Cys pair 2 motif. The chain crosses the membrane as a helical span at residues 793–813 (AGSVAMGLLFSFVCIFGLILV). At Tyr831 the chain carries Phosphotyrosine. Residue Ser838 is modified to Phosphoserine. Thr842, Thr846, and Thr851 each carry phosphothreonine. Phosphoserine is present on Ser858. A phosphothreonine mark is found at Thr872 and Thr880. The 276-residue stretch at 883 to 1158 (FHNDSLIGSG…VQVMAMFKEI (276 aa)) folds into the Protein kinase domain. A phosphoserine mark is found at Ser887 and Ser891. ATP-binding positions include 889 to 897 (IGSGGFGDV) and Lys911. A Phosphotyrosine modification is found at Tyr956. ATP-binding positions include 957 to 959 (EFM) and 963 to 966 (SLED). Phosphoserine is present on Ser981. Residue Thr982 is modified to Phosphothreonine. Asp1009 serves as the catalytic Proton acceptor. ATP contacts are provided by residues 1009-1014 (DMKSSN) and Asp1027. Position 1035 is a phosphoserine (Ser1035). Phosphothreonine is present on Thr1039. A phosphoserine mark is found at Ser1042 and Ser1044. Phosphothreonine occurs at positions 1045 and 1049. Tyr1052 bears the Phosphotyrosine mark. Ser1060 bears the Phosphoserine mark. Tyr1072 carries the post-translational modification Phosphotyrosine. A phosphoserine mark is found at Ser1166 and Ser1168. Position 1169 is a phosphothreonine (Thr1169). Phosphoserine is present on residues Ser1172 and Ser1179. The residue at position 1180 (Thr1180) is a Phosphothreonine. Ser1187 bears the Phosphoserine mark.

Belongs to the protein kinase superfamily. Ser/Thr protein kinase family. In terms of assembly, monomer or homodimer in the plasma membrane. Heterodimer with BAK1 in the endosomes. Interacts with SERK1 and TTL in a kinase-dependent manner. Bind to SERK1 in a brassinolide-dependent manner. Component of the SERK1 signaling complex, composed of KAPP, CDC48A, GRF6 or GRF7, SERK1, SERK2, SERK3/BAK1 and BRI1. Interacts with CDG1. No interactions with PSKR1 or CNGC17. Interacts with BIK1. Interacts with B'ALPHA, B'BETA, B'GAMMA and B'ETA. Interacts with BSK1 and BSK3. Interacts with BSK5, BSK6 and BSK11. Post-translationally, autophosphorylated on Tyr-831, Tyr-956 and maybe Tyr-1072. Phosphorylated on at least 12 sites, with a preference for Ser residues. Transphosphorylated on Ser-887 by SERK1 and on Ser-838, Thr-846, Ser-858 and Ser-1166 by BAK1. Phosphorylation on Ser-1166 enhances the kinase activity. In terms of processing, glycosylated. Expressed ubiquitously.

Its subcellular location is the cell membrane. The protein resides in the endosome membrane. It catalyses the reaction L-seryl-[protein] + ATP = O-phospho-L-seryl-[protein] + ADP + H(+). The catalysed reaction is L-threonyl-[protein] + ATP = O-phospho-L-threonyl-[protein] + ADP + H(+). It carries out the reaction L-tyrosyl-[protein] + ATP = O-phospho-L-tyrosyl-[protein] + ADP + H(+). With respect to regulation, activated by Ser and Thr phosphorylation. Its function is as follows. Receptor with a dual specificity kinase activity acting on both serine/threonine- and tyrosine-containing substrates. Regulates, in response to brassinosteroid binding, a signaling cascade involved in plant development, including expression of light- and stress-regulated genes, promotion of cell elongation, normal leaf and chloroplast senescence, and flowering. Binds brassinolide (BL), and less effectively castasterone (CS), but not 2,3,22,23-O-tetramethylbrassinolide or ecdysone. May be involved in a feedback regulation of brassinosteroid biosynthesis. Phosphorylates BRI1-associated receptor kinase 1 (BAK1), Transthyretin-Like protein (TTL) and SERK1 on 'Ser-299' and 'Thr-462' in vitro. May have a guanylyl cyclase activity. Phosphorylates BSK1, BSK2 and BSK3 in vitro. Phosphorylates BSK1, BSK3, BSK5, BSK6, BSK8 and BSK11 in vitro. In Arabidopsis thaliana (Mouse-ear cress), this protein is Protein BRASSINOSTEROID INSENSITIVE 1.